The following is a 448-amino-acid chain: MSQSTATYINVIGAGLAGSEAAYQIAKRGIPVKLYEMRGVKATPQHKTTNFAELVCSNSFRGDSLTNAVGLLKEEMRRLDSIIMRNGEANRVPAGGAMAVDREGYAESVTAELENHPLIEVIRDEITEIPDDAITVIATGPLTSDALAEKIHALNGGDGFYFYDAAAPIIDKSTIDMSKVYLKSRYDKGEAAYLNCPMTKEEFMAFHEALTTAEEAPLNAFEKEKYFEGCMPIEVMAKRGIKTMLYGPMKPVGLEYPDDYTGPRDGEFKTPYAVVQLRQDNAAGSLYNIVGFQTHLKWGEQKRVFQTIPGLENAEFVRYGVMHRNSYMDSPNLLTETFQSRSNPNLFFAGQMTGVEGYVESAASGLVAGINAARLFKREEALIFPQTTAIGSLPHYVTHADSKHFQPMNVNFGIIKELEGPRIRDKKERYEAIASRALADLDTCLASL.

13–18 (GAGLAG) lines the FAD pocket.

The protein belongs to the MnmG family. TrmFO subfamily. Requires FAD as cofactor.

The protein resides in the cytoplasm. The enzyme catalyses uridine(54) in tRNA + (6R)-5,10-methylene-5,6,7,8-tetrahydrofolate + NADH + H(+) = 5-methyluridine(54) in tRNA + (6S)-5,6,7,8-tetrahydrofolate + NAD(+). The catalysed reaction is uridine(54) in tRNA + (6R)-5,10-methylene-5,6,7,8-tetrahydrofolate + NADPH + H(+) = 5-methyluridine(54) in tRNA + (6S)-5,6,7,8-tetrahydrofolate + NADP(+). Functionally, catalyzes the folate-dependent formation of 5-methyl-uridine at position 54 (M-5-U54) in all tRNAs. The polypeptide is Methylenetetrahydrofolate--tRNA-(uracil-5-)-methyltransferase TrmFO (Streptococcus pyogenes serotype M6 (strain ATCC BAA-946 / MGAS10394)).